A 486-amino-acid chain; its full sequence is Cardiolipin synthase A (486 aa).

The next 2 helical transmembrane spans lie at 3-23 and 38-58; these read TVYTLVSWLAILGYWLLIAGV and MAWLLIIYILPLVGIIAYLAV. 2 consecutive PLD phosphodiesterase domains span residues 219–246 and 399–426; these read MDLRQHRKMIMIDNYIAYTGSMNMVDPR and EGGLLHTKSVLVDGELSLVGTVNLDMRS. Residues H224, K226, D231, H404, K406, and D411 contribute to the active site.

It belongs to the phospholipase D family. Cardiolipin synthase subfamily. ClsA sub-subfamily.

Its subcellular location is the cell inner membrane. It carries out the reaction 2 a 1,2-diacyl-sn-glycero-3-phospho-(1'-sn-glycerol) = a cardiolipin + glycerol. In terms of biological role, catalyzes the reversible phosphatidyl group transfer from one phosphatidylglycerol molecule to another to form cardiolipin (CL) (diphosphatidylglycerol) and glycerol. This is Cardiolipin synthase A from Shigella boydii serotype 4 (strain Sb227).